We begin with the raw amino-acid sequence, 366 residues long: MNKVVLLCRPGFEKECAAEITDKAGKREIFGFARVKENAGYVIYECYQPEDGEKLISELPFSSLIFARQWFVVGELLQHLPPEDRITPVVGMLQGVVEKGGELRVEVADTNESKELMKFCRKFTVPLRAALRDAGVLTNYETPKRPVVHVFFIAPGCCYTGYSFAHNNSPFYMGIPRLKFPSDAPSRSTLKLEEALHVFIPEDEWDERLANGMYAVDLGACPGGWTYQLVKRNMWVYSVDNGPMAQSLMDTGQVTWLREDGFRYRPNRNNISWMVCDMVEKPAKVTALMAQWLVNGWCRETIFNLKLPMKKRYEEVSHNLAYLQAQLDEHGVNAQIQARQLYHDREEVTVHVRRLWAAVGGRRDER.

S-adenosyl-L-methionine contacts are provided by residues Ser188, 221-224, Asp240, Asp260, and Asp277; that span reads CPGG. Lys306 (proton acceptor) is an active-site residue.

It belongs to the class I-like SAM-binding methyltransferase superfamily. RNA methyltransferase RlmE family. RlmM subfamily. As to quaternary structure, monomer.

It is found in the cytoplasm. It carries out the reaction cytidine(2498) in 23S rRNA + S-adenosyl-L-methionine = 2'-O-methylcytidine(2498) in 23S rRNA + S-adenosyl-L-homocysteine + H(+). Its function is as follows. Catalyzes the 2'-O-methylation at nucleotide C2498 in 23S rRNA. This chain is Ribosomal RNA large subunit methyltransferase M, found in Salmonella heidelberg (strain SL476).